The chain runs to 251 residues: Adenosylcobinamide-GDP ribazoletransferase (251 aa).

7 consecutive transmembrane segments (helical) span residues 36 to 56 (LYPF…FVLS), 60 to 80 (VPIM…TGFL), 110 to 130 (VGAF…AGMF), 141 to 161 (ILIF…VSQE), 181 to 201 (EIIL…TLGI), 202 to 222 (NYLI…LKVK), and 231 to 251 (DVAG…LGII).

This sequence belongs to the CobS family. Requires Mg(2+) as cofactor.

It localises to the cell membrane. It carries out the reaction alpha-ribazole + adenosylcob(III)inamide-GDP = adenosylcob(III)alamin + GMP + H(+). It catalyses the reaction alpha-ribazole 5'-phosphate + adenosylcob(III)inamide-GDP = adenosylcob(III)alamin 5'-phosphate + GMP + H(+). The protein operates within cofactor biosynthesis; adenosylcobalamin biosynthesis; adenosylcobalamin from cob(II)yrinate a,c-diamide: step 7/7. Functionally, joins adenosylcobinamide-GDP and alpha-ribazole to generate adenosylcobalamin (Ado-cobalamin). Also synthesizes adenosylcobalamin 5'-phosphate from adenosylcobinamide-GDP and alpha-ribazole 5'-phosphate. This is Adenosylcobinamide-GDP ribazoletransferase from Clostridium perfringens (strain ATCC 13124 / DSM 756 / JCM 1290 / NCIMB 6125 / NCTC 8237 / Type A).